The sequence spans 341 residues: Vacuolar morphogenesis protein 7 homolog (341 aa).

Residues 1-115 enclose the PX domain; sequence MALKIKIPET…KFLNIKDESE (115 aa). Residues 214–233 are compositionally biased toward low complexity; that stretch reads NSPVAPPSASSQLNSSNPSS. A disordered region spans residues 214–265; sequence NSPVAPPSASSQLNSSNPSSPFRPLSASTDKQSNTSLNRVLGKNRMPETQTT. Residues 239-251 are compositionally biased toward polar residues; the sequence is SASTDKQSNTSLN. The t-SNARE coiled-coil homology domain occupies 278–340; it reads NQTMEDQDMQ…HRTRAGLRKL (63 aa).

Possibly multimeric.

It localises to the vacuole. Its function is as follows. Essential for proper morphogenesis of the vacuole. May exist as structural reinforcement on the surface of the vacuolar membrane and be required for maintenance against rupture by osmotic pressure. The protein is Vacuolar morphogenesis protein 7 homolog of Schizosaccharomyces pombe (strain 972 / ATCC 24843) (Fission yeast).